The primary structure comprises 125 residues: Large ribosomal subunit protein uL18 (125 aa).

The protein belongs to the universal ribosomal protein uL18 family. Part of the 50S ribosomal subunit; part of the 5S rRNA/L5/L18/L25 subcomplex. Contacts the 5S and 23S rRNAs.

In terms of biological role, this is one of the proteins that bind and probably mediate the attachment of the 5S RNA into the large ribosomal subunit, where it forms part of the central protuberance. In Anaplasma marginale (strain Florida), this protein is Large ribosomal subunit protein uL18.